The following is a 147-amino-acid chain: Ubiquitin-conjugating enzyme E2 D3 (147 aa).

The region spanning 1–147 (MALKRINKEL…SREWTQKYAM (147 aa)) is the UBC core domain. The cysteines at positions 21 and 107 are disulfide-linked. Cys-85 functions as the Glycyl thioester intermediate in the catalytic mechanism.

Belongs to the ubiquitin-conjugating enzyme family. Interacts with SCF (SKP1-CUL1-F-box protein) E3 ubiquitin ligase complex; when Cullin is neddylated, the interaction between the E2 and the SCF complex is strengthened. Interacts with DAPK3. Interacts with BRCA1; the DNA damage checkpoint promotes the association with BRCA1 after ionizing radiation. Interacts non-covalently with ubiquitin. Interacts with E3 ubiquitin-protein ligase CBLC. Interacts with UBTD1. Interacts with RIGI and RNF135; involved in RIGI ubiquitination and activation. In terms of processing, phosphorylated by AURKB.

It is found in the cell membrane. The protein resides in the endosome membrane. The catalysed reaction is S-ubiquitinyl-[E1 ubiquitin-activating enzyme]-L-cysteine + [E2 ubiquitin-conjugating enzyme]-L-cysteine = [E1 ubiquitin-activating enzyme]-L-cysteine + S-ubiquitinyl-[E2 ubiquitin-conjugating enzyme]-L-cysteine.. It catalyses the reaction S-ubiquitinyl-[E1 ubiquitin-activating enzyme]-L-cysteine + [acceptor protein]-L-lysine = [E1 ubiquitin-activating enzyme]-L-cysteine + N(6)-monoubiquitinyl-[acceptor protein]-L-lysine.. It participates in protein modification; protein ubiquitination. In terms of biological role, accepts ubiquitin from the E1 complex and catalyzes its covalent attachment to other proteins. In vitro catalyzes 'Lys-11'-, as well as 'Lys-48'-linked polyubiquitination. Cooperates with the E2 CDC34 and the SCF(FBXW11) E3 ligase complex for the polyubiquitination of NFKBIA leading to its subsequent proteasomal degradation. Acts as an initiator E2, priming the phosphorylated NFKBIA target at positions 'Lys-21' and/or 'Lys-22' with a monoubiquitin. Ubiquitin chain elongation is then performed by CDC34, building ubiquitin chains from the UBE2D3-primed NFKBIA-linked ubiquitin. Also acts as an initiator E2, in conjunction with RNF8, for the priming of PCNA. Monoubiquitination of PCNA, and its subsequent polyubiquitination, are essential events in the operation of the DNA damage tolerance (DDT) pathway that is activated after DNA damage caused by UV or chemical agents during S-phase. Associates with the BRCA1/BARD1 E3 ligase complex to perform ubiquitination at DNA damage sites following ionizing radiation leading to DNA repair. Targets DAPK3 for ubiquitination which influences promyelocytic leukemia protein nuclear body (PML-NB) formation in the nucleus. In conjunction with the MDM2 and TOPORS E3 ligases, functions ubiquitination of p53/TP53. In conjunction with the CBL E3 ligase, targets EGFR for polyubiquitination at the plasma membrane as well as during its internalization and transport on endosomes. In conjunction with the STUB1 E3 quality control E3 ligase, ubiquitinates unfolded proteins to catalyze their immediate destruction. Together with RNF135, catalyzes the viral RNA-dependent 'Lys-63'-linked polyubiquitination of RIGI to activate the downstream signaling pathway that leads to interferon beta production. Together with ZNF598, catalyzes ubiquitination of 40S ribosomal proteins in response to ribosome collisions. In cooperation with the GATOR2 complex, catalyzes 'Lys-6'-linked ubiquitination of NPRL2. This is Ubiquitin-conjugating enzyme E2 D3 (UBE2D3) from Homo sapiens (Human).